The chain runs to 264 residues: Indole-3-glycerol phosphate synthase (264 aa).

The protein belongs to the TrpC family.

The enzyme catalyses 1-(2-carboxyphenylamino)-1-deoxy-D-ribulose 5-phosphate + H(+) = (1S,2R)-1-C-(indol-3-yl)glycerol 3-phosphate + CO2 + H2O. Its pathway is amino-acid biosynthesis; L-tryptophan biosynthesis; L-tryptophan from chorismate: step 4/5. This is Indole-3-glycerol phosphate synthase from Xylella fastidiosa (strain M12).